The sequence spans 120 residues: Immunoglobulin lambda variable 2-14 (120 aa).

The first 19 residues, 1 to 19 (MAWALLLLTLLTQGTGSWA), serve as a signal peptide directing secretion. Gln20 is modified (pyrrolidone carboxylic acid). The segment at 20-44 (QSALTQPASVSGSPGQSITISCTGT) is framework-1. An Ig-like domain is found at 20 to 119 (QSALTQPASV…SSYTSSSTLH (100 aa)). A disulfide bridge connects residues Cys41 and Cys109. Residues 45–53 (SSDVGGYNY) form a complementarity-determining-1 region. The interval 54-70 (VSWYQQHPGKAPKLMIY) is framework-2. The tract at residues 71 to 73 (EVS) is complementarity-determining-2. The tract at residues 74 to 109 (NRPSGVSNRFSGSKSGNTASLTISGLQAEDEADYYC) is framework-3. The tract at residues 110-119 (SSYTSSSTLH) is complementarity-determining-3.

Immunoglobulins are composed of two identical heavy chains and two identical light chains; disulfide-linked.

The protein resides in the secreted. The protein localises to the cell membrane. Its function is as follows. V region of the variable domain of immunoglobulin light chains that participates in the antigen recognition. Immunoglobulins, also known as antibodies, are membrane-bound or secreted glycoproteins produced by B lymphocytes. In the recognition phase of humoral immunity, the membrane-bound immunoglobulins serve as receptors which, upon binding of a specific antigen, trigger the clonal expansion and differentiation of B lymphocytes into immunoglobulins-secreting plasma cells. Secreted immunoglobulins mediate the effector phase of humoral immunity, which results in the elimination of bound antigens. The antigen binding site is formed by the variable domain of one heavy chain, together with that of its associated light chain. Thus, each immunoglobulin has two antigen binding sites with remarkable affinity for a particular antigen. The variable domains are assembled by a process called V-(D)-J rearrangement and can then be subjected to somatic hypermutations which, after exposure to antigen and selection, allow affinity maturation for a particular antigen. The polypeptide is Immunoglobulin lambda variable 2-14 (Homo sapiens (Human)).